Consider the following 105-residue polypeptide: DNA-directed RNA polymerase subunit omega (105 aa).

It belongs to the RNA polymerase subunit omega family. As to quaternary structure, the RNAP catalytic core consists of 2 alpha, 1 beta, 1 beta' and 1 omega subunit. When a sigma factor is associated with the core the holoenzyme is formed, which can initiate transcription.

The catalysed reaction is RNA(n) + a ribonucleoside 5'-triphosphate = RNA(n+1) + diphosphate. In terms of biological role, promotes RNA polymerase assembly. Latches the N- and C-terminal regions of the beta' subunit thereby facilitating its interaction with the beta and alpha subunits. The sequence is that of DNA-directed RNA polymerase subunit omega from Streptococcus equi subsp. equi (strain 4047).